The chain runs to 427 residues: Peptidase B (427 aa).

Mn(2+)-binding residues include Lys-195 and Asp-200. Lys-207 is an active-site residue. Mn(2+)-binding residues include Asp-218, Asp-277, and Glu-279. The active site involves Arg-281.

It belongs to the peptidase M17 family. In terms of assembly, homohexamer. Requires Mn(2+) as cofactor.

The protein localises to the cytoplasm. The enzyme catalyses Release of an N-terminal amino acid, Xaa, from a peptide or arylamide. Xaa is preferably Glu or Asp but may be other amino acids, including Leu, Met, His, Cys and Gln.. Probably plays an important role in intracellular peptide degradation. The sequence is that of Peptidase B from Shigella boydii serotype 18 (strain CDC 3083-94 / BS512).